The primary structure comprises 294 residues: 4-hydroxybenzoate octaprenyltransferase (294 aa).

The next 7 membrane-spanning stretches (helical) occupy residues 37 to 57 (LWAMWMAAGGPPGWTLFWIFF), 101 to 121 (LAVAAVLALIALALILPLNAL), 142 to 162 (FFAIPQAYLGIAFGFGIPMAF), 169 to 189 (VPFVAWLMLLANVFWAIAYDT), 219 to 239 (IMICYAVFLGLMAWAGSLLGL), 241 to 261 (WPYYAGLVAAAGMAGYHYTLI), and 271 to 293 (AAFRHNNWLGACVFAGTFVAYLL).

It belongs to the UbiA prenyltransferase family. It depends on Mg(2+) as a cofactor.

The protein resides in the cell inner membrane. The catalysed reaction is all-trans-octaprenyl diphosphate + 4-hydroxybenzoate = 4-hydroxy-3-(all-trans-octaprenyl)benzoate + diphosphate. It participates in cofactor biosynthesis; ubiquinone biosynthesis. In terms of biological role, catalyzes the prenylation of para-hydroxybenzoate (PHB) with an all-trans polyprenyl group. Mediates the second step in the final reaction sequence of ubiquinone-8 (UQ-8) biosynthesis, which is the condensation of the polyisoprenoid side chain with PHB, generating the first membrane-bound Q intermediate 3-octaprenyl-4-hydroxybenzoate. This Cupriavidus metallidurans (strain ATCC 43123 / DSM 2839 / NBRC 102507 / CH34) (Ralstonia metallidurans) protein is 4-hydroxybenzoate octaprenyltransferase.